The sequence spans 201 residues: Large ribosomal subunit protein eL15B (201 aa).

Positions 161–182 are disordered; the sequence is SRGLTSIGKKSRGIGKGHRYNN. Residues 169-179 are compositionally biased toward basic residues; it reads KKSRGIGKGHR. Serine 183 is modified (phosphoserine).

It belongs to the eukaryotic ribosomal protein eL15 family. Component of the large ribosomal subunit (LSU). Mature yeast ribosomes consist of a small (40S) and a large (60S) subunit. The 40S small subunit contains 1 molecule of ribosomal RNA (18S rRNA) and at least 33 different proteins. The large 60S subunit contains 3 rRNA molecules (25S, 5.8S and 5S rRNA) and at least 46 different proteins.

The protein localises to the cytoplasm. It is found in the nucleus. Its subcellular location is the nucleolus. Functionally, component of the ribosome, a large ribonucleoprotein complex responsible for the synthesis of proteins in the cell. The small ribosomal subunit (SSU) binds messenger RNAs (mRNAs) and translates the encoded message by selecting cognate aminoacyl-transfer RNA (tRNA) molecules. The large subunit (LSU) contains the ribosomal catalytic site termed the peptidyl transferase center (PTC), which catalyzes the formation of peptide bonds, thereby polymerizing the amino acids delivered by tRNAs into a polypeptide chain. The nascent polypeptides leave the ribosome through a tunnel in the LSU and interact with protein factors that function in enzymatic processing, targeting, and the membrane insertion of nascent chains at the exit of the ribosomal tunnel. The chain is Large ribosomal subunit protein eL15B (rpl1502) from Schizosaccharomyces pombe (strain 972 / ATCC 24843) (Fission yeast).